The primary structure comprises 319 residues: HPr kinase/phosphorylase (319 aa).

Catalysis depends on residues H141 and K162. 156-163 (GNSGVGKS) contacts ATP. S163 contacts Mg(2+). Catalysis depends on D180, which acts as the Proton acceptor; for phosphorylation activity. Proton donor; for dephosphorylation activity. The important for the catalytic mechanism of both phosphorylation and dephosphorylation stretch occupies residues 204–213 (MEIRGIGIID). Residue E205 participates in Mg(2+) binding. R246 is a catalytic residue. The important for the catalytic mechanism of dephosphorylation stretch occupies residues 267-272 (PVKVGR).

It belongs to the HPrK/P family. In terms of assembly, homohexamer. It depends on Mg(2+) as a cofactor.

The enzyme catalyses [HPr protein]-L-serine + ATP = [HPr protein]-O-phospho-L-serine + ADP + H(+). It catalyses the reaction [HPr protein]-O-phospho-L-serine + phosphate + H(+) = [HPr protein]-L-serine + diphosphate. Functionally, catalyzes the ATP- as well as the pyrophosphate-dependent phosphorylation of a specific serine residue in HPr, a phosphocarrier protein of the phosphoenolpyruvate-dependent sugar phosphotransferase system (PTS). HprK/P also catalyzes the pyrophosphate-producing, inorganic phosphate-dependent dephosphorylation (phosphorolysis) of seryl-phosphorylated HPr (P-Ser-HPr). The two antagonistic activities of HprK/P are regulated by several intracellular metabolites, which change their concentration in response to the absence or presence of rapidly metabolisable carbon sources (glucose, fructose, etc.) in the growth medium. Therefore, by controlling the phosphorylation state of HPr, HPrK/P is a sensor enzyme that plays a major role in the regulation of carbon metabolism and sugar transport: it mediates carbon catabolite repression (CCR), and regulates PTS-catalyzed carbohydrate uptake and inducer exclusion. In Lactobacillus johnsonii (strain CNCM I-12250 / La1 / NCC 533), this protein is HPr kinase/phosphorylase.